The following is a 255-amino-acid chain: Type III pantothenate kinase (255 aa).

Residue 6–13 (DVGNSYTM) coordinates ATP. 107–110 (GADR) is a binding site for substrate. Catalysis depends on Asp-109, which acts as the Proton acceptor. Asp-129 contributes to the K(+) binding site. Thr-132 contacts ATP. Thr-183 is a binding site for substrate.

This sequence belongs to the type III pantothenate kinase family. In terms of assembly, homodimer. The cofactor is NH4(+). Requires K(+) as cofactor.

Its subcellular location is the cytoplasm. It carries out the reaction (R)-pantothenate + ATP = (R)-4'-phosphopantothenate + ADP + H(+). It functions in the pathway cofactor biosynthesis; coenzyme A biosynthesis; CoA from (R)-pantothenate: step 1/5. Functionally, catalyzes the phosphorylation of pantothenate (Pan), the first step in CoA biosynthesis. The protein is Type III pantothenate kinase of Petrotoga mobilis (strain DSM 10674 / SJ95).